The following is a 368-amino-acid chain: UPF0284 protein SYNPCC7002_A1742 (368 aa).

Belongs to the UPF0284 family.

In Picosynechococcus sp. (strain ATCC 27264 / PCC 7002 / PR-6) (Agmenellum quadruplicatum), this protein is UPF0284 protein SYNPCC7002_A1742.